A 1216-amino-acid chain; its full sequence is Phospholipase D B (1216 aa).

A compositionally biased stretch (polar residues) spans Met-1–His-14. The tract at residues Met-1–Ser-48 is disordered. Over residues Gln-17–Arg-33 the composition is skewed to basic and acidic residues. 2 consecutive EF-hand domains span residues Arg-196–Gly-231 and Thr-232–Ile-267. Ca(2+)-binding residues include Asp-209, Asn-211, Asp-213, Lys-215, and Glu-220. The region spanning Glu-347 to Arg-462 is the PH domain. One can recognise a PLD phosphodiesterase 1 domain in the interval Leu-585 to Arg-612. Active-site residues include His-590, Lys-592, and Asp-597. Residues Val-732–Asn-844 form a disordered region. Residues Asn-776 to Ser-789 show a composition bias toward low complexity. The span at Glu-790–Lys-813 shows a compositional bias: acidic residues. The 28-residue stretch at Glu-1036–Ser-1063 folds into the PLD phosphodiesterase 2 domain. Residues His-1041, Lys-1043, and Asp-1048 contribute to the active site.

This sequence belongs to the phospholipase D family.

Its subcellular location is the cytoplasmic vesicle. It is found in the cytoplasm. The protein localises to the cell cortex. It carries out the reaction a 1,2-diacyl-sn-glycero-3-phosphocholine + H2O = a 1,2-diacyl-sn-glycero-3-phosphate + choline + H(+). Inhibited by butan-1-ol. Functionally, plays a role in cell growth. Hydrolyzes membrane phospholipids, such as PtdCho (phosphatidylcholine), producing the free headgroup and PtdOH (phosphatidic acid; signaling molecule on its own). Involved in the inhibition of actin-based motility and endocytosis. Its inhibition causes complete collapse of F-actin organization. Plays an important role in cell migration by localizing along the anterior cell membrane. Overexpression leads to the inability to aggregate even at higher cell density. Also known as a negative regulator of quorum sensing. This Dictyostelium discoideum (Social amoeba) protein is Phospholipase D B (pldB).